Consider the following 352-residue polypeptide: Photosystem II protein D1 (352 aa).

Threonine 2 is subject to N-acetylthreonine. Phosphothreonine is present on threonine 2. The next 3 membrane-spanning stretches (helical) occupy residues 29–46 (YIGW…TATS), 118–133 (HFLL…EWEL), and 142–156 (WIAV…AATA). Histidine 118 provides a ligand contact to chlorophyll a. Tyrosine 126 provides a ligand contact to pheophytin a. The [CaMn4O5] cluster site is built by aspartate 170 and glutamate 189. Residues 197-218 (FHMLGVAGVFGGSLFSAMHGSL) form a helical membrane-spanning segment. Histidine 198 is a chlorophyll a binding site. Residues histidine 215 and 264-265 (SF) contribute to the a quinone site. Residue histidine 215 coordinates Fe cation. Histidine 272 contacts Fe cation. Residues 274–288 (FLAAWPVVGIWFTAL) traverse the membrane as a helical segment. The [CaMn4O5] cluster site is built by histidine 332, glutamate 333, aspartate 342, and alanine 344. A propeptide spanning residues 345 to 352 (SVEAPVVG) is cleaved from the precursor.

It belongs to the reaction center PufL/M/PsbA/D family. In terms of assembly, PSII is composed of 1 copy each of membrane proteins PsbA, PsbB, PsbC, PsbD, PsbE, PsbF, PsbH, PsbI, PsbJ, PsbK, PsbL, PsbM, PsbT, PsbX, PsbY, PsbZ, Psb30/Ycf12, at least 3 peripheral proteins of the oxygen-evolving complex and a large number of cofactors. It forms dimeric complexes. The D1/D2 heterodimer binds P680, chlorophylls that are the primary electron donor of PSII, and subsequent electron acceptors. It shares a non-heme iron and each subunit binds pheophytin, quinone, additional chlorophylls, carotenoids and lipids. D1 provides most of the ligands for the Mn4-Ca-O5 cluster of the oxygen-evolving complex (OEC). There is also a Cl(-1) ion associated with D1 and D2, which is required for oxygen evolution. The PSII complex binds additional chlorophylls, carotenoids and specific lipids. is required as a cofactor. Tyr-161 forms a radical intermediate that is referred to as redox-active TyrZ, YZ or Y-Z. In terms of processing, C-terminally processed by CTPA; processing is essential to allow assembly of the oxygen-evolving complex and thus photosynthetic growth.

It is found in the plastid. The protein localises to the chloroplast thylakoid membrane. The enzyme catalyses 2 a plastoquinone + 4 hnu + 2 H2O = 2 a plastoquinol + O2. Photosystem II (PSII) is a light-driven water:plastoquinone oxidoreductase that uses light energy to abstract electrons from H(2)O, generating O(2) and a proton gradient subsequently used for ATP formation. It consists of a core antenna complex that captures photons, and an electron transfer chain that converts photonic excitation into a charge separation. The D1/D2 (PsbA/PsbD) reaction center heterodimer binds P680, the primary electron donor of PSII as well as several subsequent electron acceptors. This Zygnema circumcarinatum (Green alga) protein is Photosystem II protein D1.